Here is a 161-residue protein sequence, read N- to C-terminus: Monooxygenase AgnL5 (161 aa).

The protein belongs to the avfA family.

It participates in secondary metabolite biosynthesis. Monooxygenase; part of the gene cluster that mediates the biosynthesis of agnestins, dihydroxy-xanthone metabolites. The pathway begins with the assembly and cyclization of atrochrysone thioester by the non-reducing polyketide synthase Agnpks1. The atrochrysone carboxyl ACP thioesterase AgnL7 then breaks the thioester bond and releases the atrochrysone carboxylic acid as the first enzyme-free intermediate. The decarboxylase AgnL1 then catalyzes the concerted decarboxylation-elimination required to convert atochrysone carboxylic acid into emodin anthrone, which is further oxidized to emodin by the anthrone oxygenase AgnL2. Emodin then undergoes reduction catalyzed by the oxidoreductase AgnL4 to yield the dihydroquinone tautomer which is the substrate for reduction by the short chain dehydrogenase AgnL6 reduction to produce hydroxyketone, followed by AgnL8 dehydration and likely spontaneous autoxidation to chrysophanol. Baeyer-Villiger oxidation by the oxidase AgnL3 leads to monodictyphenone via cleavage of the C-10/C-10a bond of chrysophanol. Alternative cleavage at the C-4a/C-10 bond of chrysophanol also leads to the formation some cephalone F. Further conversion to agnestins A and B, requires reduction to dihydro-monodictyphenone, oxidation to agnestin C probably via an epoxide, and rearrangement to either agnestin A or agnestin B directly, although agnestin A or agnestin B can also interconvert. Within the cluster, AgnR1 is the only unassigned oxidoreductase present which could be involved in this conversion. However, AgnR1 seems not to be involved in this step, and thus genes involved in the proposed oxidation/reduction may be located elsewhere on the genome. Further agnestin A derivatives are probably formed by spontaneous decarboxylations, dehydrations and methanolysis reactions. The polypeptide is Monooxygenase AgnL5 (Paecilomyces divaricatus (Penicillium divaricatum)).